Reading from the N-terminus, the 413-residue chain is Hemolin (413 aa).

The signal sequence occupies residues 1–18 (MASKSLVVLSACIIIGSA). 4 Ig-like C2-type domains span residues 25–112 (PVLK…RVIS), 122–211 (PAKT…GEVR), 233–322 (PQYL…LKVT), and 327–413 (PKYV…VQVN). Cystine bridges form between C46/C97, C140/C199, C252/C305, and C349/C395. An N-linked (GlcNAc...) asparagine glycan is attached at N283.

It belongs to the hemolin family. In terms of tissue distribution, expressed in larval bristles.

The protein resides in the secreted. With respect to regulation, increased activity in presence of phospholipids (low concentrations) and calcium ions. Inhibited by PMSF. Not affected by EDTA and E-64. Bristle toxin involved in caterpillar defense by participating in hemorrhagic syndrome characterized by a consumptive coagulopathy. Exhibits procoagulant activity through selective factor X proteolytic activation. Activates factor X in a dose- and time-dependent manner but does not activate gamma-carboxyglutamic acid domainless factor X. Its activity does not depend on calcium ions. Also functions as a growth stimulator and an inhibitor of cellular death for endothelial cells. In vitro, increases proliferation of human umbilical vein endothelial cells (HUVEC) and inhibits the apoptosis induced by starvation. Also increases slightly the complement decay-accelerating factor (CD55), which protects cells from complement-mediated lysis. On the other hand, does not alter the release or expression of von Willebrand factor (VWF), tissue factor (F3), intercellular adhesion molecule-1 (ICAM1), interleukin-8 (CXCL8), and prostacyclin. Does not show fibrinolytic or fibrinogenolytic activities. The chain is Hemolin from Lonomia obliqua (Moth).